The sequence spans 273 residues: Putative pyruvate, phosphate dikinase regulatory protein (273 aa).

ADP is bound at residue 153-160 (GVSRTSKS).

This sequence belongs to the pyruvate, phosphate/water dikinase regulatory protein family. PDRP subfamily.

The catalysed reaction is N(tele)-phospho-L-histidyl/L-threonyl-[pyruvate, phosphate dikinase] + ADP = N(tele)-phospho-L-histidyl/O-phospho-L-threonyl-[pyruvate, phosphate dikinase] + AMP + H(+). The enzyme catalyses N(tele)-phospho-L-histidyl/O-phospho-L-threonyl-[pyruvate, phosphate dikinase] + phosphate + H(+) = N(tele)-phospho-L-histidyl/L-threonyl-[pyruvate, phosphate dikinase] + diphosphate. Functionally, bifunctional serine/threonine kinase and phosphorylase involved in the regulation of the pyruvate, phosphate dikinase (PPDK) by catalyzing its phosphorylation/dephosphorylation. The protein is Putative pyruvate, phosphate dikinase regulatory protein of Ehrlichia ruminantium (strain Welgevonden).